A 301-amino-acid chain; its full sequence is 3-methyl-2-oxobutanoate hydroxymethyltransferase (301 aa).

Positions 1 to 28 are enriched in low complexity; the sequence is MATSNSSDSSMSAEVPAPYGNGPANAPA. Residues 1-37 are disordered; it reads MATSNSSDSSMSAEVPAPYGNGPANAPATPSDTAKKP. Residues Asp-82 and Asp-121 each coordinate Mg(2+). 3-methyl-2-oxobutanoate is bound by residues 82 to 83, Asp-121, and Lys-151; that span reads DS. Glu-153 provides a ligand contact to Mg(2+). The active-site Proton acceptor is the Glu-219.

Belongs to the PanB family. In terms of assembly, homodecamer; pentamer of dimers. Requires Mg(2+) as cofactor.

It localises to the cytoplasm. The enzyme catalyses 3-methyl-2-oxobutanoate + (6R)-5,10-methylene-5,6,7,8-tetrahydrofolate + H2O = 2-dehydropantoate + (6S)-5,6,7,8-tetrahydrofolate. It functions in the pathway cofactor biosynthesis; (R)-pantothenate biosynthesis; (R)-pantoate from 3-methyl-2-oxobutanoate: step 1/2. Functionally, catalyzes the reversible reaction in which hydroxymethyl group from 5,10-methylenetetrahydrofolate is transferred onto alpha-ketoisovalerate to form ketopantoate. This chain is 3-methyl-2-oxobutanoate hydroxymethyltransferase, found in Arthrobacter sp. (strain FB24).